The following is a 186-amino-acid chain: Transcription factor FapR (186 aa).

This sequence belongs to the FapR family.

In terms of biological role, transcriptional factor involved in regulation of membrane lipid biosynthesis by repressing genes involved in fatty acid and phospholipid metabolism. This Staphylococcus epidermidis (strain ATCC 35984 / DSM 28319 / BCRC 17069 / CCUG 31568 / BM 3577 / RP62A) protein is Transcription factor FapR.